The following is a 255-amino-acid chain: Triosephosphate isomerase (255 aa).

10-12 (NWK) contacts substrate. Histidine 96 acts as the Electrophile in catalysis. Glutamate 168 serves as the catalytic Proton acceptor. Substrate-binding positions include glycine 174, serine 213, and 234–235 (GG).

Belongs to the triosephosphate isomerase family. In terms of assembly, homodimer.

Its subcellular location is the cytoplasm. The catalysed reaction is D-glyceraldehyde 3-phosphate = dihydroxyacetone phosphate. It participates in carbohydrate biosynthesis; gluconeogenesis. The protein operates within carbohydrate degradation; glycolysis; D-glyceraldehyde 3-phosphate from glycerone phosphate: step 1/1. In terms of biological role, involved in the gluconeogenesis. Catalyzes stereospecifically the conversion of dihydroxyacetone phosphate (DHAP) to D-glyceraldehyde-3-phosphate (G3P). This Histophilus somni (strain 129Pt) (Haemophilus somnus) protein is Triosephosphate isomerase.